Here is a 363-residue protein sequence, read N- to C-terminus: Protein RecA (363 aa).

66–73 (GPESSGKT) provides a ligand contact to ATP. The interval 327–363 (YGIDEKSIADRENPEKIKEKREETSEENKTDNSEKTK) is disordered. The segment covering 329 to 363 (IDEKSIADRENPEKIKEKREETSEENKTDNSEKTK) has biased composition (basic and acidic residues).

Belongs to the RecA family.

It localises to the cytoplasm. Its function is as follows. Can catalyze the hydrolysis of ATP in the presence of single-stranded DNA, the ATP-dependent uptake of single-stranded DNA by duplex DNA, and the ATP-dependent hybridization of homologous single-stranded DNAs. It interacts with LexA causing its activation and leading to its autocatalytic cleavage. This Lactobacillus acidophilus (strain ATCC 700396 / NCK56 / N2 / NCFM) protein is Protein RecA.